A 203-amino-acid polypeptide reads, in one-letter code: Ras-related protein Rab-7a (203 aa).

GTP-binding positions include 15–22 (GDSGVGKT), 34–40 (SNQYKAT), 63–67 (DTAGQ), 125–128 (NKID), and 157–158 (AK). An Effector region motif is present at residues 37–45 (YKATIGADF). 2 S-geranylgeranyl cysteine lipidation sites follow: cysteine 202 and cysteine 203.

This sequence belongs to the small GTPase superfamily. Rab family.

The protein localises to the late endosome membrane. It is found in the lysosome membrane. Its subcellular location is the cytoplasmic vesicle. It localises to the autophagosome membrane. The protein resides in the lipid droplet. It catalyses the reaction GTP + H2O = GDP + phosphate + H(+). Functionally, small GTPase which cycles between active GTP-bound and inactive GDP-bound states. In its active state, binds to a variety of effector proteins playing a key role in the regulation of endo-lysosomal trafficking. Governs early-to-late endosomal maturation, microtubule minus-end as well as plus-end directed endosomal migration and positioning, and endosome-lysosome transport through different protein-protein interaction cascades. Involved in lipophagy, a cytosolic lipase-independent autophagic pathway. The protein is Ras-related protein Rab-7a (rab7A) of Dictyostelium discoideum (Social amoeba).